The sequence spans 117 residues: Hemerythrin subunit beta (117 aa).

7 residues coordinate Fe cation: histidine 24, histidine 53, glutamate 57, histidine 72, histidine 76, histidine 105, and aspartate 110.

It belongs to the hemerythrin family. In terms of assembly, octamer composed of two types of chains: alpha and beta.

In terms of biological role, hemerythrin is a respiratory protein in blood cells of certain marine worms. The oxygen-binding site in each chain contains two iron atoms. The protein is Hemerythrin subunit beta of Lingula anatina (Brachiopod).